The sequence spans 291 residues: Small ribosomal subunit biogenesis GTPase RsgA 2 (291 aa).

Positions 63–221 constitute a CP-type G domain; that stretch reads ENALVRPPVA…VADTPGFSSI (159 aa). Residues 112-115 and 164-172 contribute to the GTP site; these read SKMD and GQSGVGKST. Zn(2+)-binding residues include Cys245, Cys250, His252, and Cys258.

This sequence belongs to the TRAFAC class YlqF/YawG GTPase family. RsgA subfamily. In terms of assembly, monomer. Associates with 30S ribosomal subunit, binds 16S rRNA. Zn(2+) is required as a cofactor.

Its subcellular location is the cytoplasm. Its function is as follows. One of several proteins that assist in the late maturation steps of the functional core of the 30S ribosomal subunit. Helps release RbfA from mature subunits. May play a role in the assembly of ribosomal proteins into the subunit. Circularly permuted GTPase that catalyzes slow GTP hydrolysis, GTPase activity is stimulated by the 30S ribosomal subunit. The sequence is that of Small ribosomal subunit biogenesis GTPase RsgA 2 from Listeria monocytogenes serovar 1/2a (strain ATCC BAA-679 / EGD-e).